Reading from the N-terminus, the 456-residue chain is ATP synthase subunit beta (456 aa).

135–142 (GGAGVGKT) lines the ATP pocket.

Belongs to the ATPase alpha/beta chains family. F-type ATPases have 2 components, CF(1) - the catalytic core - and CF(0) - the membrane proton channel. CF(1) has five subunits: alpha(3), beta(3), gamma(1), delta(1), epsilon(1). CF(0) has four main subunits: a(1), b(1), b'(1) and c(9-12).

It is found in the cellular thylakoid membrane. The catalysed reaction is ATP + H2O + 4 H(+)(in) = ADP + phosphate + 5 H(+)(out). Produces ATP from ADP in the presence of a proton gradient across the membrane. The catalytic sites are hosted primarily by the beta subunits. The sequence is that of ATP synthase subunit beta (atpD) from Acaryochloris marina (strain MBIC 11017).